The following is a 65-amino-acid chain: Large ribosomal subunit protein bL35 (65 aa).

The tract at residues 1-20 (MPKMKTNSGSKKRFTLTGTG) is disordered.

It belongs to the bacterial ribosomal protein bL35 family.

The sequence is that of Large ribosomal subunit protein bL35 from Bacteroides thetaiotaomicron (strain ATCC 29148 / DSM 2079 / JCM 5827 / CCUG 10774 / NCTC 10582 / VPI-5482 / E50).